Consider the following 473-residue polypeptide: Mogroside IIIx synthase (473 aa).

His21 serves as the catalytic Proton acceptor. Asp123 (charge relay) is an active-site residue. 8 residues coordinate UDP-alpha-D-glucose: Thr274, Gln337, Trp355, Asn356, Ser357, Glu360, Asp376, and Gln377.

It belongs to the UDP-glycosyltransferase family. As to expression, highly expressed in mature fruits.

It catalyses the reaction mogroside IIE + UDP-alpha-D-glucose = mogroside IIIX + UDP + H(+). It carries out the reaction mogroside III + UDP-alpha-D-glucose = siamenoside I + UDP + H(+). The protein operates within secondary metabolite biosynthesis; terpenoid biosynthesis. Functionally, UDP-glycosyltransferase involved in the biosynthesis of cucurbitacin and mogroside tetracyclic triterpene natural products (e.g. siamenoside I and mogrosides IV, V and VI). Cucurbitacins have cytotoxic properties and exhibit deterrent taste as a defense barrier against herbivores. Mogrosides are nonsugar highly oxygenated compounds used as high-intensity zero-calorie sweeteners; they also possess pharmacological properties such as regulating immunity, lowering blood sugar and lipid levels, protecting the liver, and acting as antioxidants and antitumor agents. Catalyzes the branched glucosylations of mogroside II-E and mogroside III. The protein is Mogroside IIIx synthase of Siraitia grosvenorii (Monk's fruit).